We begin with the raw amino-acid sequence, 263 residues long: MFRNQYDNDVTVWSPQGRIHQIEYAMEAVKQGSATVGLKSKTHAVLVALKRAQSELAAHQKKILHVDNHIGISIAGLTADARLLCNFMRQECLDSRFVFDRPLPVSRLVSLIGSKTQIPTQRYGRRPYGVGLLIAGYDDMGPHIFQTCPSANYFDCRAMSIGARSQSARTYLERHMSEFMECNLDELVKHGLRALRETLPAEQDLTTKNVSIGIVGKDLEFTIYDDDDVSPFLDGLEERPQRKAQPSQAAEEPAEKADEPMEH.

At Met1 the chain carries N-acetylmethionine. Ser110 carries the post-translational modification Phosphoserine; alternate. Ser110 carries O-linked (GlcNAc) serine; alternate glycosylation. Lys115 is covalently cross-linked (Glycyl lysine isopeptide (Lys-Gly) (interchain with G-Cter in ubiquitin)). A Phosphoserine modification is found at Ser177. Residue Lys208 forms a Glycyl lysine isopeptide (Lys-Gly) (interchain with G-Cter in ubiquitin) linkage. Positions 232 to 263 (FLDGLEERPQRKAQPSQAAEEPAEKADEPMEH) are disordered. Positions 253–263 (PAEKADEPMEH) are enriched in basic and acidic residues.

It belongs to the peptidase T1A family. In terms of assembly, the 26S proteasome consists of a 20S proteasome core and two 19S regulatory subunits. The 20S proteasome core is a barrel-shaped complex made of 28 subunits that are arranged in four stacked rings. The two outer rings are each formed by seven alpha subunits, and the two inner rings are formed by seven beta subunits. The proteolytic activity is exerted by three beta-subunits PSMB5, PSMB6 and PSMB7. Interacts with NOTCH3. Interacts with ZFAND1. In terms of processing, C-terminal extension is partially cleaved off by limited proteolysis leading to a conversion of the proteasome from its latent into its active form. Detected in liver (at protein level).

It is found in the cytoplasm. It localises to the nucleus. In terms of biological role, component of the 20S core proteasome complex involved in the proteolytic degradation of most intracellular proteins. This complex plays numerous essential roles within the cell by associating with different regulatory particles. Associated with two 19S regulatory particles, forms the 26S proteasome and thus participates in the ATP-dependent degradation of ubiquitinated proteins. The 26S proteasome plays a key role in the maintenance of protein homeostasis by removing misfolded or damaged proteins that could impair cellular functions, and by removing proteins whose functions are no longer required. Associated with the PA200 or PA28, the 20S proteasome mediates ubiquitin-independent protein degradation. This type of proteolysis is required in several pathways including spermatogenesis (20S-PA200 complex) or generation of a subset of MHC class I-presented antigenic peptides (20S-PA28 complex). This is Proteasome subunit alpha type-1 (Psma1) from Mus musculus (Mouse).